Reading from the N-terminus, the 236-residue chain is Probable glutathione S-transferase BZ2 (236 aa).

Positions 1 to 80 constitute a GST N-terminal domain; sequence MRVLGGEVSP…YIEDVARESG (80 aa). Residues Ser-9, Lys-37, Ile-51, and 64–65 contribute to the glutathione site; that span reads ES. Residues 92–221 enclose the GST C-terminal domain; sequence DPYERAMHRF…LPDTEKVVQF (130 aa).

This sequence belongs to the GST superfamily. HSP26 family.

The catalysed reaction is RX + glutathione = an S-substituted glutathione + a halide anion + H(+). It functions in the pathway pigment biosynthesis; anthocyanin biosynthesis. This chain is Probable glutathione S-transferase BZ2 (BZ2), found in Zea mays (Maize).